The sequence spans 581 residues: Prolactin receptor (581 aa).

An N-terminal signal peptide occupies residues 1 to 24; it reads MKENAASRVVFILLLFLSVSLLNG. The Extracellular segment spans residues 25 to 237; that stretch reads QSPPEKPKLV…NDFPVKDTSM (213 aa). Fibronectin type-III domains are found at residues 27–127 and 129–229; these read PPEK…IVEP and PPAN…IPND. Cysteine 36 and cysteine 46 are disulfide-bonded. Residue asparagine 59 is glycosylated (N-linked (GlcNAc...) asparagine). An intrachain disulfide couples cysteine 75 to cysteine 86. Asparagine 132 carries N-linked (GlcNAc...) asparagine glycosylation. Residues aspartate 211 and histidine 212 each contribute to the Zn(2+) site. Residues 215–219 carry the WSXWS motif motif; it reads WSEWS. A helical transmembrane segment spans residues 238-258; the sequence is WIFVAILSAVICLIMVWAVAL. Topologically, residues 259 to 581 are cytoplasmic; sequence KGYSMVTCIL…PAKKAPPALP (323 aa). Residues 267-275 carry the Box 1 motif motif; that stretch reads ILPPVPGPK. Disordered stretches follow at residues 324 to 384 and 458 to 499; these read QLMP…EKLE and DQHA…PRPQ. Basic and acidic residues-rich tracts occupy residues 329-349, 375-384, and 469-483; these read PSKE…DSDS, HTPEGPEKLE, and ETGR…RESE.

This sequence belongs to the type I cytokine receptor family. Type 1 subfamily. Interacts with SMARCA1. Interacts with NEK3 and VAV2 and this interaction is prolactin-dependent. In terms of tissue distribution, expressed in all tissues examined; liver, peripheral blood lymphocytes, endometrium, corpus luteum, intestine, fetal thymus, fetal spleen, fetal liver and fetal brain.

Its subcellular location is the membrane. In terms of biological role, this is a receptor for the anterior pituitary hormone prolactin. The polypeptide is Prolactin receptor (PRLR) (Bos taurus (Bovine)).